Reading from the N-terminus, the 283-residue chain is Agmatinase (283 aa).

A divalent metal cation contacts are provided by His-112, Asp-131, His-133, Asp-135, Asp-211, and Asp-213.

Belongs to the arginase family. Agmatinase subfamily. Homotetramer. A divalent metal cation serves as cofactor.

It carries out the reaction agmatine + H2O = urea + putrescine. It functions in the pathway amine and polyamine biosynthesis; putrescine biosynthesis via agmatine pathway; putrescine from agmatine: step 1/1. Inhibited by putrescine. Activity is not affected by arginine and ornithine. Its function is as follows. Catalyzes the formation of putrescine from agmatine. Cannot use arginine. The sequence is that of Agmatinase from Pyrococcus horikoshii (strain ATCC 700860 / DSM 12428 / JCM 9974 / NBRC 100139 / OT-3).